Here is a 332-residue protein sequence, read N- to C-terminus: Chorismate synthase (332 aa).

An NADP(+)-binding site is contributed by R46. FMN-binding positions include 123 to 125, G253, 268 to 272, and R295; these read HFS and KPTSS.

This sequence belongs to the chorismate synthase family. Homotetramer. FMNH2 is required as a cofactor.

The enzyme catalyses 5-O-(1-carboxyvinyl)-3-phosphoshikimate = chorismate + phosphate. Its pathway is metabolic intermediate biosynthesis; chorismate biosynthesis; chorismate from D-erythrose 4-phosphate and phosphoenolpyruvate: step 7/7. In terms of biological role, catalyzes the anti-1,4-elimination of the C-3 phosphate and the C-6 proR hydrogen from 5-enolpyruvylshikimate-3-phosphate (EPSP) to yield chorismate, which is the branch point compound that serves as the starting substrate for the three terminal pathways of aromatic amino acid biosynthesis. This reaction introduces a second double bond into the aromatic ring system. The sequence is that of Chorismate synthase from Chitinophaga pinensis (strain ATCC 43595 / DSM 2588 / LMG 13176 / NBRC 15968 / NCIMB 11800 / UQM 2034).